Here is a 155-residue protein sequence, read N- to C-terminus: Large ribosomal subunit protein uL13 (155 aa).

The protein belongs to the universal ribosomal protein uL13 family. In terms of assembly, part of the 50S ribosomal subunit.

This protein is one of the early assembly proteins of the 50S ribosomal subunit, although it is not seen to bind rRNA by itself. It is important during the early stages of 50S assembly. In Rickettsia rickettsii (strain Iowa), this protein is Large ribosomal subunit protein uL13.